The sequence spans 334 residues: Thioredoxin reductase (334 aa).

FAD-binding positions include 11-14 (SGAG), 40-41 (TA), Gln45, Asn54, Cys148, Asp294, and 301-303 (RQA). Cys145 and Cys148 form a disulfide bridge.

The protein belongs to the class-II pyridine nucleotide-disulfide oxidoreductase family. In terms of assembly, homodimer. FAD is required as a cofactor.

The enzyme catalyses [thioredoxin]-dithiol + NADP(+) = [thioredoxin]-disulfide + NADPH + H(+). Functionally, component of the thioredoxin-thioredoxin reductase system which may be involved in biosynthesis of penicillins and cephalosporins and may be important in determining the thiol-disulfide redox balance. This is Thioredoxin reductase (TRR1) from Penicillium chrysogenum (Penicillium notatum).